The sequence spans 296 residues: Thioredoxin-related transmembrane protein 2 (296 aa).

Positions 1–48 are cleaved as a signal peptide; that stretch reads MAVLAPLIALVYSVPRLSRWLAQPYYLLSALLSAAFLLVRKLPPLCHG. Residues 49–102 are Extracellular-facing; it reads LPTQREDGNPCDFDWREVEILMFLSAIVMMKNRRSITVEQHIGNIFMFSKVANA. Residues 103 to 125 form a helical membrane-spanning segment; the sequence is ILFFRLDIRMGLLYITLCIVFLM. The 156-residue stretch at 114 to 269 folds into the Thioredoxin domain; sequence LLYITLCIVF…LYQRAKKLSK (156 aa). The Cytoplasmic portion of the chain corresponds to 126-296; sequence TCKPPLYMGP…VSDGESKKDK (171 aa). Phosphoserine is present on residues S211, S243, and S288. Residues 269 to 296 form a disordered region; sequence KAGDNIPEEQPVAPTPTRVSDGESKKDK. Residues 293–296 carry the Di-lysine motif motif; the sequence is KKDK.

As to quaternary structure, monomer. Homodimer; disulfide-linked. Occurs in both reduced and oxidized monomeric form. Oxidative conditions increase homodimerization. Interacts with CANX. Interacts with ATP2A2.

The protein localises to the endoplasmic reticulum membrane. Its subcellular location is the mitochondrion membrane. Its function is as follows. Endoplasmic reticulum and mitochondria-associated protein that probably functions as a regulator of cellular redox state and thereby regulates protein post-translational modification, protein folding and mitochondrial activity. Indirectly regulates neuronal proliferation, migration, and organization in the developing brain. The polypeptide is Thioredoxin-related transmembrane protein 2 (TMX2) (Macaca fascicularis (Crab-eating macaque)).